The following is a 416-amino-acid chain: Calreticulin (416 aa).

The signal sequence occupies residues 1-25 (MENRGRNPSFLSLLLLLSLFAIASA). An N-linked (GlcNAc...) asparagine glycan is attached at Asn57. Cys111 and Cys143 are oxidised to a cystine. An alpha-D-glucoside-binding residues include Tyr115, Lys117, Tyr134, and Asp141. Asn157 carries an N-linked (GlcNAc...) asparagine glycan. Repeat copies occupy residues 197–208 (KQTGSLYTDWDL), 216–227 (DPEAKKPEDWDD), 233–244 (DPEDKKPEGYDD), 251–262 (DPEAKKPEDWDD), 266–276 (GEWTAPTIPNP), 280–290 (GPWKAKKIKNP), and 294–304 (GKWKAPMIDNP). The interval 197–262 (KQTGSLYTDW…EAKKPEDWDD (66 aa)) is 4 X approximate repeats. Residues 217–241 (PEAKKPEDWDDKEFIPDPEDKKPEG) are compositionally biased toward basic and acidic residues. The interval 217-281 (PEAKKPEDWD…TIPNPEYKGP (65 aa)) is disordered. The segment at 266–304 (GEWTAPTIPNPEYKGPWKAKKIKNPNYKGKWKAPMIDNP) is 3 X approximate repeats. Glu324 contacts an alpha-D-glucoside. Basic and acidic residues predominate over residues 351-381 (EETWGKQKDAEKAAFEELEKKREEEETKDDP). Residues 351-416 (EETWGKQKDA…DKDDDQHDEL (66 aa)) form a disordered region. Over residues 382–400 (VESDAEDEDEAEADDSDKD) the composition is skewed to acidic residues. The segment covering 401 to 416 (DADKSDDKDDDQHDEL) has biased composition (basic and acidic residues). A Prevents secretion from ER motif is present at residues 413-416 (HDEL).

Belongs to the calreticulin family.

It is found in the endoplasmic reticulum lumen. Functionally, molecular calcium-binding chaperone promoting folding, oligomeric assembly and quality control in the ER via the calreticulin/calnexin cycle. This lectin may interact transiently with almost all of the monoglucosylated glycoproteins that are synthesized in the ER. In Beta vulgaris (Sugar beet), this protein is Calreticulin.